The primary structure comprises 72 residues: DNA-directed RNA polymerase subunit epsilon (72 aa).

Belongs to the RNA polymerase subunit epsilon family. In terms of assembly, RNAP is composed of a core of 2 alpha, a beta and a beta' subunit. The core is associated with a delta subunit, and at least one of epsilon or omega. When a sigma factor is associated with the core the holoenzyme is formed, which can initiate transcription.

The enzyme catalyses RNA(n) + a ribonucleoside 5'-triphosphate = RNA(n+1) + diphosphate. A non-essential component of RNA polymerase (RNAP). The polypeptide is DNA-directed RNA polymerase subunit epsilon (Lactiplantibacillus plantarum (strain ATCC BAA-793 / NCIMB 8826 / WCFS1) (Lactobacillus plantarum)).